We begin with the raw amino-acid sequence, 1407 residues long: Trichohyalin (1407 aa).

An S-100-like region spans residues 1 to 91; it reads MSPLLKSIID…AQAAYYALGQ (91 aa). 2 consecutive EF-hand domains span residues 23–48 and 49–84; these read CDGA…LQRP and HDPE…LAQA. Residues Asp-32, Asp-62, Asp-64, Asp-66, and Glu-73 each contribute to the Ca(2+) site. Disordered stretches follow at residues 148-172, 218-237, 362-471, 486-587, 1014-1033, 1062-1082, and 1313-1407; these read EEEE…DKEQ, LREE…RALQ, REQA…EEEQ, EQLQ…ERER, REEE…EEER, KEEK…EEQQ, and EQFA…QYRP. Basic and acidic residues-rich tracts occupy residues 362–381, 396–424, 447–471, and 554–587; these read REQA…RQLE, RRQE…EQAR, SLRE…EEEQ, and QREK…ERER. Positions 1313–1376 are enriched in basic and acidic residues; it reads EQFAREEKSR…FREDQSRRQV (64 aa).

Belongs to the S100-fused protein family. Homodimer. In terms of processing, substrate of transglutaminase. Some 200 arginines are probably converted to citrullines by peptidylarginine deimidase. Found in the hard keratinizing tissues such as the inner root sheath (IRS) of hair follicles and medulla, and in the filiform papillae of dorsal tongue epithelium.

In terms of biological role, intermediate filament-associated protein that associates in regular arrays with keratin intermediate filaments (KIF) of the inner root sheath cells of the hair follicle and the granular layer of the epidermis. It later becomes cross-linked to KIF by isodipeptide bonds. It may serve as scaffold protein, together with involucrin, in the organization of the cell envelope or even anchor the cell envelope to the KIF network. It may be involved in its own calcium-dependent postsynthetic processing during terminal differentiation. The sequence is that of Trichohyalin (TCHH) from Oryctolagus cuniculus (Rabbit).